A 417-amino-acid polypeptide reads, in one-letter code: Serine--tRNA ligase (417 aa).

Position 224 to 226 (224 to 226 (TSE)) interacts with L-serine. ATP contacts are provided by residues 255-257 (RRE) and Val271. Glu278 is an L-serine binding site. An ATP-binding site is contributed by 342–345 (ELTS). Residue Thr377 coordinates L-serine.

It belongs to the class-II aminoacyl-tRNA synthetase family. Type-1 seryl-tRNA synthetase subfamily. Homodimer. The tRNA molecule binds across the dimer.

The protein resides in the cytoplasm. It carries out the reaction tRNA(Ser) + L-serine + ATP = L-seryl-tRNA(Ser) + AMP + diphosphate + H(+). It catalyses the reaction tRNA(Sec) + L-serine + ATP = L-seryl-tRNA(Sec) + AMP + diphosphate + H(+). The protein operates within aminoacyl-tRNA biosynthesis; selenocysteinyl-tRNA(Sec) biosynthesis; L-seryl-tRNA(Sec) from L-serine and tRNA(Sec): step 1/1. Catalyzes the attachment of serine to tRNA(Ser). Is also able to aminoacylate tRNA(Sec) with serine, to form the misacylated tRNA L-seryl-tRNA(Sec), which will be further converted into selenocysteinyl-tRNA(Sec). In Mycobacterium leprae (strain TN), this protein is Serine--tRNA ligase.